The primary structure comprises 462 residues: Acetate--CoA ligase [ADP-forming] I subunit alpha (462 aa).

Belongs to the acetate CoA ligase alpha subunit family. In terms of assembly, heterotetramer of two alpha and two beta subunits.

It localises to the cytoplasm. It carries out the reaction acetate + ATP + CoA = acetyl-CoA + ADP + phosphate. Its activity is regulated as follows. Activity is dependent on magnesium. Its function is as follows. Catalyzes the reversible formation of acetate and ATP from acetyl-CoA by using ADP and phosphate. Can use other substrates such as isobutyryl-CoA, propionyl-CoA and butyryl-CoA, but not indoleacetyl-CoA, phenylacetyl-CoA or succinyl-CoA. Seems to be involved primarily in the conversion of acetyl-CoA to acetate. Participates in the degradation of branched-chain amino acids via branched-chain-acyl-CoA esters. This is Acetate--CoA ligase [ADP-forming] I subunit alpha from Pyrococcus furiosus (strain ATCC 43587 / DSM 3638 / JCM 8422 / Vc1).